A 113-amino-acid chain; its full sequence is Mediator of RNA polymerase II transcription subunit 22 (113 aa).

Belongs to the Mediator complex subunit 22 family. Component of the Mediator complex.

The protein localises to the nucleus. Its function is as follows. Component of the Mediator complex, a coactivator involved in the regulated transcription of nearly all RNA polymerase II-dependent genes. Mediator functions as a bridge to convey information from gene-specific regulatory proteins to the basal RNA polymerase II transcription machinery. Mediator is recruited to promoters by direct interactions with regulatory proteins and serves as a scaffold for the assembly of a functional preinitiation complex with RNA polymerase II and the general transcription factors. This Candida glabrata (strain ATCC 2001 / BCRC 20586 / JCM 3761 / NBRC 0622 / NRRL Y-65 / CBS 138) (Yeast) protein is Mediator of RNA polymerase II transcription subunit 22 (SRB6).